The following is a 662-amino-acid chain: Glycogen debranching enzyme (662 aa).

The active-site Nucleophile is Asp-338. The Proton donor role is filled by Glu-373.

Belongs to the glycosyl hydrolase 13 family.

It carries out the reaction Hydrolysis of (1-&gt;6)-alpha-D-glucosidic linkages to branches with degrees of polymerization of three or four glucose residues in limit dextrin.. The protein operates within glycan degradation; glycogen degradation. In terms of biological role, removes maltotriose and maltotetraose chains that are attached by 1,6-alpha-linkage to the limit dextrin main chain, generating a debranched limit dextrin. The sequence is that of Glycogen debranching enzyme from Yersinia pseudotuberculosis serotype I (strain IP32953).